A 315-amino-acid chain; its full sequence is Lipoyl synthase (315 aa).

[4Fe-4S] cluster contacts are provided by cysteine 62, cysteine 67, cysteine 73, cysteine 88, cysteine 92, cysteine 95, and serine 302. One can recognise a Radical SAM core domain in the interval 74 to 291; sequence FGKGTATFMI…ETEALAMGFK (218 aa).

The protein belongs to the radical SAM superfamily. Lipoyl synthase family. [4Fe-4S] cluster serves as cofactor.

Its subcellular location is the cytoplasm. It catalyses the reaction [[Fe-S] cluster scaffold protein carrying a second [4Fe-4S](2+) cluster] + N(6)-octanoyl-L-lysyl-[protein] + 2 oxidized [2Fe-2S]-[ferredoxin] + 2 S-adenosyl-L-methionine + 4 H(+) = [[Fe-S] cluster scaffold protein] + N(6)-[(R)-dihydrolipoyl]-L-lysyl-[protein] + 4 Fe(3+) + 2 hydrogen sulfide + 2 5'-deoxyadenosine + 2 L-methionine + 2 reduced [2Fe-2S]-[ferredoxin]. The protein operates within protein modification; protein lipoylation via endogenous pathway; protein N(6)-(lipoyl)lysine from octanoyl-[acyl-carrier-protein]: step 2/2. Catalyzes the radical-mediated insertion of two sulfur atoms into the C-6 and C-8 positions of the octanoyl moiety bound to the lipoyl domains of lipoate-dependent enzymes, thereby converting the octanoylated domains into lipoylated derivatives. The chain is Lipoyl synthase from Aromatoleum aromaticum (strain DSM 19018 / LMG 30748 / EbN1) (Azoarcus sp. (strain EbN1)).